The primary structure comprises 322 residues: Transaldolase (322 aa).

Residue Lys136 is the Schiff-base intermediate with substrate of the active site.

This sequence belongs to the transaldolase family. Type 1 subfamily. Homodimer.

The protein resides in the cytoplasm. It carries out the reaction D-sedoheptulose 7-phosphate + D-glyceraldehyde 3-phosphate = D-erythrose 4-phosphate + beta-D-fructose 6-phosphate. It participates in carbohydrate degradation; pentose phosphate pathway; D-glyceraldehyde 3-phosphate and beta-D-fructose 6-phosphate from D-ribose 5-phosphate and D-xylulose 5-phosphate (non-oxidative stage): step 2/3. Functionally, transaldolase is important for the balance of metabolites in the pentose-phosphate pathway. The protein is Transaldolase of Xanthomonas campestris pv. campestris (strain B100).